The sequence spans 417 residues: MASAMELSLLNPAMHHYGIAAKTASHLPVVPARRASSGAVRFRVRAAAAAPPAPAAKPGSPKKRGKTEVNESLLTPRFYTTDFDEMEQLFNAEINKQLNQDEFDALLQEFKTDYNQTHFIRNPEFKEAADKMQGPLRQIFVEFLERSCTAEFSGFLLYKELGRRLKKTNPVVAEIFSLMSRDEARHAGFLNKGLSDFNLALDLGFLTKARKYTFFKPKFIFYATYLSEKIGYWRYITIFRHLKANPEYQVYPIFKYFENWCQDENRHGDFFSALLKAQPQFLNDWKAKLWSRFFCLSVYITMYLNDCQRSAFYEGIGLNTKEFDMHVIYETNRTTARIFPAVPDVENPEFKRKLDRMVDINLKIISIGESNDLPLVKNLKRVPLIAQLVSEIIAAYLMPPIESGSVDFAEFEPKLVY.

The transit peptide at 1-45 directs the protein to the chloroplast; sequence MASAMELSLLNPAMHHYGIAAKTASHLPVVPARRASSGAVRFRVR.

The protein belongs to the AcsF family. Fe cation is required as a cofactor.

The protein localises to the plastid. Its subcellular location is the chloroplast membrane. The enzyme catalyses Mg-protoporphyrin IX 13-monomethyl ester + 3 NADPH + 3 O2 + 2 H(+) = 3,8-divinyl protochlorophyllide a + 3 NADP(+) + 5 H2O. It functions in the pathway porphyrin-containing compound metabolism; chlorophyll biosynthesis. In terms of biological role, catalyzes the formation of the isocyclic ring in chlorophyll biosynthesis. Mediates the cyclase reaction, which results in the formation of divinylprotochlorophyllide (Pchlide) characteristic of all chlorophylls from magnesium-protoporphyrin IX 13-monomethyl ester (MgPMME). The chain is Magnesium-protoporphyrin IX monomethyl ester [oxidative] cyclase, chloroplastic (CRD1) from Hordeum vulgare (Barley).